The following is a 217-amino-acid chain: Killer cell lectin-like receptor subfamily B member 1F (217 aa).

Topologically, residues 1–45 (MDTSRVYGNVKTFRSPGHKQASFPSLSTDACRCPHWHHLALKLGC) are cytoplasmic. Residues 31–34 (CRCP) carry the LCK-binding motif motif. A helical; Signal-anchor for type II membrane protein membrane pass occupies residues 46–66 (ATLILLLLTLIGLSVFVRFLV). Over 67-217 (QKPLIEKCSM…WICQKTLKHV (151 aa)) the chain is Extracellular. The region spanning 101–211 (HRNKCLIISQ…CSSDNHWICQ (111 aa)) is the C-type lectin domain. Cystine bridges form between Cys122–Cys210 and Cys189–Cys202.

In terms of tissue distribution, expressed in natural killer cells and a subset of T-cells.

Its subcellular location is the membrane. Binds CLEC2I/Clr-g leading to activation of natural killer cells or stimulation of IL-2 production and proliferation of T-cells in response to antigen stimulation. May contribute to the formation of the immunological synapse between T-cells and antigen-presenting dendritic cells. The protein is Killer cell lectin-like receptor subfamily B member 1F of Rattus norvegicus (Rat).